The primary structure comprises 307 residues: MLKGRNLLDPMDFSLEELEGVFKLADEIIESPEKFLHVCDGKILATLFYEPSTRTRFSFEAAMLRLGGQVIGFSEPNSSSVAKGESVADTIRTVGCYADIAAMRHPKEGAPAIAAMYSEIPVINAGDGSHQHPTQTLTDLLTIRSLKGDLSNLTIGCCGDLKFGRTVHSLVKALSRYKNNKFVFMSPEELKIPDYIRKEILEKNNIEYKEVSKMEDAMAELDILYMTRVQRERFFNEDDYVRLKDSYILDGEKMKYAKKDMMVLHPLPRVNEIAYEIDQDPRGCYFKQAKYGMYVRMALIAKLLGVR.

Residues Arg54 and Thr55 each coordinate carbamoyl phosphate. Lys83 is a binding site for L-aspartate. The carbamoyl phosphate site is built by Arg104, His132, and Gln135. The L-aspartate site is built by Arg165 and Arg228. Carbamoyl phosphate is bound by residues Leu267 and Pro268.

This sequence belongs to the aspartate/ornithine carbamoyltransferase superfamily. ATCase family. As to quaternary structure, heterododecamer (2C3:3R2) of six catalytic PyrB chains organized as two trimers (C3), and six regulatory PyrI chains organized as three dimers (R2).

The catalysed reaction is carbamoyl phosphate + L-aspartate = N-carbamoyl-L-aspartate + phosphate + H(+). It functions in the pathway pyrimidine metabolism; UMP biosynthesis via de novo pathway; (S)-dihydroorotate from bicarbonate: step 2/3. In terms of biological role, catalyzes the condensation of carbamoyl phosphate and aspartate to form carbamoyl aspartate and inorganic phosphate, the committed step in the de novo pyrimidine nucleotide biosynthesis pathway. The protein is Aspartate carbamoyltransferase catalytic subunit of Clostridium botulinum (strain Loch Maree / Type A3).